The chain runs to 154 residues: MAARLCCQLDPSRDVLCLRPVSAESSGRPLPGPFGALSPPSPSAVPADHGAHLSLRGLPVCSFSSAGPCALRFTSARYMETAMNTSHHLPRQLYKWTLGLFVMSTTGVEKYFKDCVFAEWEELGNESRLMTFVLGGCRHKLVCAPAPCNFFTSA.

The mitochondrial targeting sequence stretch occupies residues 68 to 117 (PCALRFTSARYMETAMNTSHHLPRQLYKWTLGLFVMSTTGVEKYFKDCVF).

The protein belongs to the orthohepadnavirus protein X family. As to quaternary structure, may form homodimer. May interact with host CEBPA, CFLAR, CREB1, DDB1, E4F1, HBXIP, HSPD1/HSP60, NFKBIA, POLR2E and SMAD4. Interacts with host SMC5-SMC6 complex and induces its degradation. Interacts with host TRPC4AP; leading to prevent ubiquitination of TRPC4AP. Interacts with host PLSCR1; this interaction promotes ubiquitination and degradation of HBx and impairs HBx-mediated cell proliferation. In terms of processing, a fraction may be phosphorylated in insect cells and HepG2 cells, a human hepatoblastoma cell line. Phosphorylated in vitro by host protein kinase C or mitogen-activated protein kinase. N-acetylated in insect cells.

Its subcellular location is the host cytoplasm. The protein resides in the host nucleus. It is found in the host mitochondrion. In terms of biological role, multifunctional protein that plays a role in silencing host antiviral defenses and promoting viral transcription. Does not seem to be essential for HBV infection. May be directly involved in development of cirrhosis and liver cancer (hepatocellular carcinoma). Most of cytosolic activities involve modulation of cytosolic calcium. The effect on apoptosis is controversial depending on the cell types in which the studies have been conducted. May induce apoptosis by localizing in mitochondria and causing loss of mitochondrial membrane potential. May also modulate apoptosis by binding host CFLAR, a key regulator of the death-inducing signaling complex (DISC). Promotes viral transcription by using the host E3 ubiquitin ligase DDB1 to target the SMC5-SMC6 complex to proteasomal degradation. This host complex would otherwise bind to viral episomal DNA, and prevents its transcription. Moderately stimulates transcription of many different viral and cellular transcription elements. Promoters and enhancers stimulated by HBx contain DNA binding sites for NF-kappa-B, AP-1, AP-2, c-EBP, ATF/CREB, or the calcium-activated factor NF-AT. The chain is Protein X from Hepatitis B virus genotype G (isolate IG29227/2000) (HBV-G).